The following is a 272-amino-acid chain: Putative hydro-lyase BBta_2883 (272 aa).

It belongs to the D-glutamate cyclase family.

This is Putative hydro-lyase BBta_2883 from Bradyrhizobium sp. (strain BTAi1 / ATCC BAA-1182).